Consider the following 392-residue polypeptide: Cell division protein FtsZ (392 aa).

GTP is bound by residues 24 to 28 (GGGCN), 111 to 113 (GTG), E142, R145, and D189.

Belongs to the FtsZ family. As to quaternary structure, homodimer. Polymerizes to form a dynamic ring structure in a strictly GTP-dependent manner. Interacts directly with several other division proteins.

Its subcellular location is the cytoplasm. Essential cell division protein that forms a contractile ring structure (Z ring) at the future cell division site. The regulation of the ring assembly controls the timing and the location of cell division. One of the functions of the FtsZ ring is to recruit other cell division proteins to the septum to produce a new cell wall between the dividing cells. Binds GTP and shows GTPase activity. The protein is Cell division protein FtsZ of Neisseria gonorrhoeae.